The primary structure comprises 91 residues: Small ribosomal subunit protein uS19 (91 aa).

It belongs to the universal ribosomal protein uS19 family.

Protein S19 forms a complex with S13 that binds strongly to the 16S ribosomal RNA. In Synechococcus sp. (strain CC9311), this protein is Small ribosomal subunit protein uS19.